Consider the following 274-residue polypeptide: Thiamine kinase (274 aa).

The protein belongs to the thiamine kinase family.

It catalyses the reaction thiamine + ATP = thiamine phosphate + ADP + H(+). Its pathway is cofactor biosynthesis; thiamine diphosphate biosynthesis; thiamine phosphate from thiamine: step 1/1. Catalyzes the ATP-dependent phosphorylation of thiamine to thiamine phosphate. Is involved in thiamine salvage. This chain is Thiamine kinase, found in Escherichia coli (strain SMS-3-5 / SECEC).